Reading from the N-terminus, the 163-residue chain is MDALEEESFALSFSSASDAEFDAVVGYLEDIIMDDEFQLLQRNFMDKYYLEFEDTEENKLTYTPIFNEYISLVEKYIEEQLLQRIPGFNMAAFTTTLQHHKDEVAGDIFDMLLTFTDFLAFKEMFLDYRAEKEGRGLDLSSGLVVTSLCKSSSVSASQNNLRH.

This sequence belongs to the ARL2BP family. As to quaternary structure, interacts with GTP bound ARL2 and ARL3; the complex ARL2-ARL2BP as well as ARL2BP alone, binds to SLC25A4/ANT1. Interaction with ARL2 may be required for cilia basal body localization. Interacts with STAT3; interaction is enhanced with ARL2. Found in a complex with ARL2BP, ARL2 and SLC25A6. Found in a complex with ARL2, ARL2BP and SLC25A4. Interacts with STAT2, STAT3 and STAT4.

It is found in the cytoplasm. The protein resides in the mitochondrion intermembrane space. The protein localises to the cytoskeleton. It localises to the microtubule organizing center. Its subcellular location is the centrosome. It is found in the nucleus. The protein resides in the spindle. The protein localises to the cilium basal body. Functionally, together with ARL2, plays a role in the nuclear translocation, retention and transcriptional activity of STAT3. May play a role as an effector of ARL2. The polypeptide is ADP-ribosylation factor-like protein 2-binding protein (ARL2BP) (Macaca fascicularis (Crab-eating macaque)).